The chain runs to 358 residues: Chorismate synthase (358 aa).

Residue Arg-47 coordinates NADP(+). FMN contacts are provided by residues 124-126 (RSS), 240-241 (NA), Gly-284, 299-303 (KPIAT), and Arg-325.

Belongs to the chorismate synthase family. Homotetramer. FMNH2 is required as a cofactor.

It carries out the reaction 5-O-(1-carboxyvinyl)-3-phosphoshikimate = chorismate + phosphate. It participates in metabolic intermediate biosynthesis; chorismate biosynthesis; chorismate from D-erythrose 4-phosphate and phosphoenolpyruvate: step 7/7. Catalyzes the anti-1,4-elimination of the C-3 phosphate and the C-6 proR hydrogen from 5-enolpyruvylshikimate-3-phosphate (EPSP) to yield chorismate, which is the branch point compound that serves as the starting substrate for the three terminal pathways of aromatic amino acid biosynthesis. This reaction introduces a second double bond into the aromatic ring system. This Bacteroides thetaiotaomicron (strain ATCC 29148 / DSM 2079 / JCM 5827 / CCUG 10774 / NCTC 10582 / VPI-5482 / E50) protein is Chorismate synthase.